Here is a 194-residue protein sequence, read N- to C-terminus: Thymidine kinase (194 aa).

Residues 9 to 16 (GAMNSGKT) and 85 to 88 (DECQ) contribute to the ATP site. The Proton acceptor role is filled by Glu-86. Zn(2+) contacts are provided by Cys-143, Cys-146, Cys-180, and His-183.

The protein belongs to the thymidine kinase family. In terms of assembly, homotetramer.

Its subcellular location is the cytoplasm. The enzyme catalyses thymidine + ATP = dTMP + ADP + H(+). The polypeptide is Thymidine kinase (Enterococcus faecalis (strain ATCC 700802 / V583)).